We begin with the raw amino-acid sequence, 277 residues long: MPYIGCHLSSAKGYEAMGRVALSIGANTFQFFTRNPRGSKAKAIDEQDIARFLELARNNGFGTLLAHAPYTLNPCSADPSVARFAAQVLKEDLELMEHLPGNLYNFHPGCHVGQGVEKGIELVADQLNDVLSPEQKTIVLLETMSGKGSEVGRTFEELAAIMERVDLKDKLGVCLDTCHVYSAGYDIVNRLDSVLEHFDAVLGLERLRAIHLNDSMTPFSSFKDRHETIGKGSLGEQAFINIINHPVLRELPFFLETPRDDAGHGEEITWLKEHYRN.

Zn(2+) is bound by residues H67, H107, E142, D176, H179, H211, D224, H226, and E256.

Belongs to the AP endonuclease 2 family. Zn(2+) is required as a cofactor.

The catalysed reaction is Endonucleolytic cleavage to 5'-phosphooligonucleotide end-products.. Its function is as follows. Endonuclease IV plays a role in DNA repair. It cleaves phosphodiester bonds at apurinic or apyrimidinic (AP) sites, generating a 3'-hydroxyl group and a 5'-terminal sugar phosphate. This is Probable endonuclease 4 from Akkermansia muciniphila (strain ATCC BAA-835 / DSM 22959 / JCM 33894 / BCRC 81048 / CCUG 64013 / CIP 107961 / Muc).